We begin with the raw amino-acid sequence, 1854 residues long: Immunoglobulin A1 protease (1854 aa).

The first 37 residues, 1–37, serve as a signal peptide directing secretion; sequence MKKFLGEKQTRFAFRKLAVGLVSAAISSLFFVSIVGV. Positions 38–99 are excised as a propeptide; that stretch reads DSVQAQEKLN…NAGAKTLPNT (62 aa). An LPXTG sorting signal motif is present at residues 96-100; it reads LPNTG. Thr99 is subject to Pentaglycyl murein peptidoglycan amidated threonine. 2 helical membrane-spanning segments follow: residues 106–125 and 132–154; these read TMMA…FAVS and KFLL…VDAL. Residues 155–1854 are Extracellular-facing; sequence ENGSLLQYNA…FRKSIFENQK (1700 aa). A G5 domain is found at 256-335; the sequence is KPELLYKETS…PKIVEKGTKK (80 aa). Repeat copies occupy residues 349-368, 369-388, 389-406, 407-426, 427-446, 447-466, 467-486, 487-506, 507-526, and 527-546. The 10 X 20 AA approximate tandem repeats stretch occupies residues 349 to 546; sequence VQPEQVAPLP…EYTGNIEPAA (198 aa). Over residues 533 to 550 the composition is skewed to low complexity; the sequence is EPPQEYTGNIEPAAPEAE. Residues 533-570 are disordered; sequence EPPQEYTGNIEPAAPEAENPTEKAQEPKEQKQEPEKNI. A compositionally biased stretch (basic and acidic residues) spans 552–570; sequence PTEKAQEPKEQKQEPEKNI. His1494 contributes to the Zn(2+) binding site. Residue Glu1495 is part of the active site. Zn(2+) contacts are provided by His1498 and Glu1518.

Belongs to the peptidase M26 family. It depends on Zn(2+) as a cofactor. Post-translationally, the Gram-positive cell-wall anchor motif LPXTG is located in the N-terminal part, in contrast to such motifs in other known streptococcal and staphylococcal proteins. The protease could be cleaved by the sortase and anchored in the membrane via the two potential N-terminal transmembrane domains, whereas the propeptide located prior to the LPXTG motif would remain attached to the cell wall peptidoglycan by an amide bond.

The protein resides in the secreted. The protein localises to the cell wall. It is found in the membrane. It catalyses the reaction Cleavage of Pro-|-Thr bond in the hinge region of the heavy chain of human IgA.. With respect to regulation, inhibited by EDTA. Zinc metalloproteinase which cleaves human immunoglobulin A1 (IgA1) in the hinge region. The protein is Immunoglobulin A1 protease (iga) of Streptococcus sanguinis.